The chain runs to 490 residues: Betaine aldehyde dehydrogenase (490 aa).

K(+) is bound by residues isoleucine 27 and aspartate 93. An NAD(+)-binding site is contributed by 150-152; the sequence is GAW. Lysine 162 (charge relay system) is an active-site residue. 176-179 lines the NAD(+) pocket; the sequence is KPSE. Valine 180 lines the K(+) pocket. 230–233 is a binding site for NAD(+); it reads GTTT. Leucine 246 is a K(+) binding site. Glutamate 252 serves as the catalytic Proton acceptor. The NAD(+) site is built by glycine 254, cysteine 286, and glutamate 387. Cysteine 286 serves as the catalytic Nucleophile. Cysteine 286 bears the Cysteine sulfenic acid (-SOH) mark. The K(+) site is built by lysine 457 and glycine 460. Glutamate 464 acts as the Charge relay system in catalysis.

The protein belongs to the aldehyde dehydrogenase family. Dimer of dimers. It depends on K(+) as a cofactor.

The catalysed reaction is betaine aldehyde + NAD(+) + H2O = glycine betaine + NADH + 2 H(+). The protein operates within amine and polyamine biosynthesis; betaine biosynthesis via choline pathway; betaine from betaine aldehyde: step 1/1. Its function is as follows. Involved in the biosynthesis of the osmoprotectant glycine betaine. Catalyzes the irreversible oxidation of betaine aldehyde to the corresponding acid. In Pseudomonas putida (strain ATCC 700007 / DSM 6899 / JCM 31910 / BCRC 17059 / LMG 24140 / F1), this protein is Betaine aldehyde dehydrogenase.